We begin with the raw amino-acid sequence, 89 residues long: UPF0223 protein BAMEG_4214 (89 aa).

Belongs to the UPF0223 family.

The polypeptide is UPF0223 protein BAMEG_4214 (Bacillus anthracis (strain CDC 684 / NRRL 3495)).